Consider the following 426-residue polypeptide: Glutamate-1-semialdehyde 2,1-aminomutase (426 aa).

K265 bears the N6-(pyridoxal phosphate)lysine mark.

This sequence belongs to the class-III pyridoxal-phosphate-dependent aminotransferase family. HemL subfamily. Homodimer. It depends on pyridoxal 5'-phosphate as a cofactor.

The protein localises to the cytoplasm. It carries out the reaction (S)-4-amino-5-oxopentanoate = 5-aminolevulinate. Its pathway is porphyrin-containing compound metabolism; protoporphyrin-IX biosynthesis; 5-aminolevulinate from L-glutamyl-tRNA(Glu): step 2/2. This is Glutamate-1-semialdehyde 2,1-aminomutase from Pectobacterium atrosepticum (strain SCRI 1043 / ATCC BAA-672) (Erwinia carotovora subsp. atroseptica).